Reading from the N-terminus, the 311-residue chain is tRNA dimethylallyltransferase (311 aa).

Residue 10–17 (GPTAVGKT) participates in ATP binding. A substrate-binding site is contributed by 12–17 (TAVGKT). Residues 35-38 (DSMQ) form an interaction with substrate tRNA region.

This sequence belongs to the IPP transferase family. As to quaternary structure, monomer. It depends on Mg(2+) as a cofactor.

It catalyses the reaction adenosine(37) in tRNA + dimethylallyl diphosphate = N(6)-dimethylallyladenosine(37) in tRNA + diphosphate. Its function is as follows. Catalyzes the transfer of a dimethylallyl group onto the adenine at position 37 in tRNAs that read codons beginning with uridine, leading to the formation of N6-(dimethylallyl)adenosine (i(6)A). This Anoxybacillus flavithermus (strain DSM 21510 / WK1) protein is tRNA dimethylallyltransferase.